A 118-amino-acid polypeptide reads, in one-letter code: UPF0102 protein PC1_0307 (118 aa).

This sequence belongs to the UPF0102 family.

This is UPF0102 protein PC1_0307 from Pectobacterium carotovorum subsp. carotovorum (strain PC1).